We begin with the raw amino-acid sequence, 377 residues long: Opsin, blue-sensitive (377 aa).

The Extracellular portion of the chain corresponds to 1–56 (MLLHNKTLAGKALAFIAEEGYVPSMREKFLGWNVPPEYSDLVHPHWRAFPAPGKHF). An N-linked (GlcNAc...) asparagine glycan is attached at Asn-5. A helical transmembrane segment spans residues 57-81 (HIGLAIIYSMLLIMSLVGNCCVIWI). Topologically, residues 82-93 (FSTSKSLRTPSN) are cytoplasmic. The chain crosses the membrane as a helical span at residues 94–119 (MFIVSLAIFDIIMAFEMPMLVISSFM). The Extracellular segment spans residues 120–132 (ERMIGWEIGCDVY). Cysteines 129 and 206 form a disulfide. Residues 133-152 (SVFGSISGMGQAMTNAAIAF) traverse the membrane as a helical segment. Over 153-170 (DRYRTISCPIDGRLNSKQ) the chain is Cytoplasmic. Residues 171–195 (AAVIIAFTWFWVTPFTVLPLLKVWG) form a helical membrane-spanning segment. Over 196 to 219 (RYTTEGFLTTCSFDFLTDDEDTKV) the chain is Extracellular. The chain crosses the membrane as a helical span at residues 220–247 (FVTCIFIWAYVIPLIFIILFYSRLLSSI). The Cytoplasmic portion of the chain corresponds to 248–282 (RNHEKMLREQAKKMNVKSLVSNQDKERSAEVRIAK). A helical transmembrane segment spans residues 283–306 (VAFTIFFLFLLAWTPYATVALIGV). Over 307–314 (YGNRELLT) the chain is Extracellular. Residues 315–339 (PVSTMLPAVFAKTVSCIDPWIYAIN) traverse the membrane as a helical segment. The residue at position 326 (Lys-326) is an N6-(retinylidene)lysine. Topologically, residues 340-377 (HPRYRQELQKRCKWMGIHEPETTSDATSAQTEKIKTDE) are cytoplasmic.

Belongs to the G-protein coupled receptor 1 family. Opsin subfamily. Post-translationally, phosphorylated on some or all of the serine and threonine residues present in the C-terminal region. In terms of tissue distribution, expressed in the dorsal region of the retina and sparsely expressed in the ventral region.

It is found in the membrane. In terms of biological role, visual pigments are the light-absorbing molecules that mediate vision. They consist of an apoprotein, opsin, covalently linked to 11-cis-retinal. The polypeptide is Opsin, blue-sensitive (BLOP) (Apis mellifera (Honeybee)).